The sequence spans 274 residues: Peroxiredoxin-4 (274 aa).

A signal peptide spans 1 to 40 (MEAPPPPPPLPATTLAPGRSRKLLLLPLLLFLLRAEAVRG). Residues 82–240 (AKISKPAPYW…TLRLVQAFQY (159 aa)) enclose the Thioredoxin domain. The active-site Cysteine sulfenic acid (-SOH) intermediate is Cys-127.

The protein belongs to the peroxiredoxin family. AhpC/Prx1 subfamily. Homodimer; disulfide-linked, upon oxidation. 5 homodimers assemble to form a ring-like decamer. Post-translationally, the enzyme can be inactivated by further oxidation of the cysteine sulfenic acid (C(P)-SOH) to sulphinic acid (C(P)-SO2H) and sulphonic acid (C(P)-SO3H) instead of its condensation to a disulfide bond.

Its subcellular location is the cytoplasm. The protein localises to the endoplasmic reticulum. It carries out the reaction a hydroperoxide + [thioredoxin]-dithiol = an alcohol + [thioredoxin]-disulfide + H2O. Thiol-specific peroxidase that catalyzes the reduction of hydrogen peroxide and organic hydroperoxides to water and alcohols, respectively. Plays a role in cell protection against oxidative stress by detoxifying peroxides and as sensor of hydrogen peroxide-mediated signaling events. Regulates the activation of NF-kappa-B in the cytosol by a modulation of I-kappa-B-alpha phosphorylation. The protein is Peroxiredoxin-4 (PRDX4) of Bos taurus (Bovine).